We begin with the raw amino-acid sequence, 296 residues long: MGAHLIDGKAIAQQLRERIAQEVADLKAHRGLVPGLAVVLVGEDAASQVYVGSKEKMAVAVGMHSVVCRLAATTSEAEVLAKVEALNADPTIDGILVQLPLPAHIDEDKILLAIDPDKDVDGFHPVNVGRLSIGQSNGEHGMVPCTPKGCLMLLKGVLGDLTGKTALVIGRSNIVGKPMAQLLLSANCTVTLAHSRSRDLPDLCRRMDIVVAAVGRPEMVKGDWLKPGAVVIDVGMNRLPAAPGAEKGKLVGDVDYASAAAVAGAITPVPGGVGPMTIACLLANTLEACKARGAGA.

Residues 170 to 172 and Ser195 each bind NADP(+); that span reads GRS.

The protein belongs to the tetrahydrofolate dehydrogenase/cyclohydrolase family. Homodimer.

The catalysed reaction is (6R)-5,10-methylene-5,6,7,8-tetrahydrofolate + NADP(+) = (6R)-5,10-methenyltetrahydrofolate + NADPH. The enzyme catalyses (6R)-5,10-methenyltetrahydrofolate + H2O = (6R)-10-formyltetrahydrofolate + H(+). It participates in one-carbon metabolism; tetrahydrofolate interconversion. Catalyzes the oxidation of 5,10-methylenetetrahydrofolate to 5,10-methenyltetrahydrofolate and then the hydrolysis of 5,10-methenyltetrahydrofolate to 10-formyltetrahydrofolate. This Rhodospirillum rubrum (strain ATCC 11170 / ATH 1.1.1 / DSM 467 / LMG 4362 / NCIMB 8255 / S1) protein is Bifunctional protein FolD.